An 87-amino-acid chain; its full sequence is Small ribosomal subunit protein bS20 (87 aa).

Belongs to the bacterial ribosomal protein bS20 family.

In terms of biological role, binds directly to 16S ribosomal RNA. The polypeptide is Small ribosomal subunit protein bS20 (Shigella flexneri).